Reading from the N-terminus, the 206-residue chain is dTTP/UTP pyrophosphatase (206 aa).

D79 acts as the Proton acceptor in catalysis.

The protein belongs to the Maf family. YhdE subfamily. The cofactor is a divalent metal cation.

The protein resides in the cytoplasm. It carries out the reaction dTTP + H2O = dTMP + diphosphate + H(+). It catalyses the reaction UTP + H2O = UMP + diphosphate + H(+). Functionally, nucleoside triphosphate pyrophosphatase that hydrolyzes dTTP and UTP. May have a dual role in cell division arrest and in preventing the incorporation of modified nucleotides into cellular nucleic acids. This chain is dTTP/UTP pyrophosphatase, found in Rhizobium etli (strain ATCC 51251 / DSM 11541 / JCM 21823 / NBRC 15573 / CFN 42).